A 607-amino-acid chain; its full sequence is Aspartate--tRNA(Asp/Asn) ligase (607 aa).

Glutamate 194 lines the L-aspartate pocket. Residues 218 to 221 (QLFK) form an aspartate region. Arginine 240 contributes to the L-aspartate binding site. Residues 240 to 242 (RDE) and glutamine 249 each bind ATP. Residue histidine 468 coordinates L-aspartate. Glutamate 502 serves as a coordination point for ATP. Arginine 509 is an L-aspartate binding site. Residue 554–557 (GLDR) participates in ATP binding.

The protein belongs to the class-II aminoacyl-tRNA synthetase family. Type 1 subfamily. Homodimer.

The protein resides in the cytoplasm. It catalyses the reaction tRNA(Asx) + L-aspartate + ATP = L-aspartyl-tRNA(Asx) + AMP + diphosphate. In terms of biological role, aspartyl-tRNA synthetase with relaxed tRNA specificity since it is able to aspartylate not only its cognate tRNA(Asp) but also tRNA(Asn). Reaction proceeds in two steps: L-aspartate is first activated by ATP to form Asp-AMP and then transferred to the acceptor end of tRNA(Asp/Asn). This chain is Aspartate--tRNA(Asp/Asn) ligase, found in Desulfotalea psychrophila (strain LSv54 / DSM 12343).